The primary structure comprises 165 residues: GTP-dependent dephospho-CoA kinase (165 aa).

The GTP site is built by D44, V45, D63, K65, E115, and D138.

It belongs to the GTP-dependent DPCK family.

It carries out the reaction 3'-dephospho-CoA + GTP = GDP + CoA + H(+). It functions in the pathway cofactor biosynthesis; coenzyme A biosynthesis. Catalyzes the GTP-dependent phosphorylation of the 3'-hydroxyl group of dephosphocoenzyme A to form coenzyme A (CoA). This chain is GTP-dependent dephospho-CoA kinase, found in Picrophilus torridus (strain ATCC 700027 / DSM 9790 / JCM 10055 / NBRC 100828 / KAW 2/3).